A 64-amino-acid chain; its full sequence is Large ribosomal subunit protein bL33c (64 aa).

Belongs to the bacterial ribosomal protein bL33 family.

Its subcellular location is the plastid. The protein localises to the organellar chromatophore. The protein is Large ribosomal subunit protein bL33c of Paulinella chromatophora.